Here is a 111-residue protein sequence, read N- to C-terminus: UPF0060 membrane protein NFA_36830 (111 aa).

Transmembrane regions (helical) follow at residues Leu7 to Gly27, Gly33 to Phe53, Val62 to Asp82, and Leu91 to Gly111.

Belongs to the UPF0060 family.

It is found in the cell membrane. This Nocardia farcinica (strain IFM 10152) protein is UPF0060 membrane protein NFA_36830.